The sequence spans 83 residues: Non-muscle caldesmon (83 aa).

Basic and acidic residues-rich tracts occupy residues Gln1–Lys44 and Asn62–Lys76. A myosin and calmodulin-binding region spans residues Gln1–Gln63. The tract at residues Gln1–Leu83 is disordered.

In terms of processing, in non-muscle cells, phosphorylation by CDC2 during mitosis causes caldesmon to dissociate from microfilaments. Phosphorylation reduces caldesmon binding to actin, myosin, and calmodulin as well as its inhibition of actomyosin ATPase activity. Phosphorylation also occurs in both quiescent and dividing smooth muscle cells with similar effects on the interaction with actin and calmodulin and on microfilaments reorganization.

It localises to the cytoplasm. The protein resides in the cytoskeleton. Its subcellular location is the myofibril. The protein localises to the stress fiber. Its function is as follows. Actin- and myosin-binding protein implicated in the regulation of actomyosin interactions in smooth muscle and nonmuscle cells (could act as a bridge between myosin and actin filaments). Stimulates actin binding of tropomyosin which increases the stabilization of actin filament structure. In muscle tissues, inhibits the actomyosin ATPase by binding to F-actin. This inhibition is attenuated by calcium-calmodulin and is potentiated by tropomyosin. Interacts with actin, myosin, two molecules of tropomyosin and with calmodulin. Also plays an essential role during cellular mitosis and receptor capping. The polypeptide is Non-muscle caldesmon (CALD1) (Bos taurus (Bovine)).